A 906-amino-acid chain; its full sequence is MDKVKIQEIAEEAGLSNGELIEKAKELGFNVKAANSAISMDDAGILVDFAISGTLPKGFKKPGEKPKLKVVKKKTVEKEPETIVEAPVIEKETAPEKTEVIPEETENTVEESTAAETVESEPETAVIEEIETPAETAKEETVEAAPVVKEVKQRKGISVVSKKAESEAEKGTEIEKPKRRTLSRTGIKIVRKAKPAPVRAATRISMGSGAPTPPSKKKVKKGPAEARETGKKIDIFNHDSMSGDIDSGFGEEEVVLLDFSDKNIYEDMMRQEQKRREEAKKREAANGGPAKGRQPFRPQQRRSLKRGGKRKKYTKEESSEVITSVEIPENVRVYEFAEKVNRSVGEVVKVLFALGMMVTKNDFLSKDEIEILAEEFGVEVSTMNPLDELDYVQAYDEVEDTHLEERPPVITIMGHVDHGKTSLLDKIRSAKVADKEAGGITQHVGAYQVEKNGKKITFVDTPGHEAFTEMRARGAQATDIVIIVVAADDGVMPQTKEAIAHTKAAGVPMIIAMNKMDKESANPDNIKSQLAEIDVMAADWGGEYEFVPVSAHTGLGIDDLLETILLQAEMMELKADPTRKAKAVVVESSVEKGFGPVANVIIKNGTLHVGDNVIVGTTYGRIKAIKLDDGSAVKEIGPSTPAAIVGLNEVPGAGEALVAMDTDKEVRELAEKRAEYDRAKQLSKSTKASLDDLSALIAEGQLKSLPVIIKADVQGSLEAIKGSLEKLRNEEVKVNIIHEGVGGVTESDVTLADASEHAVILGFNVRPTGSVKKKAKELGVEVRTYTIIYDLLDDVKALLGGMMSPVIKEEVTGQAEVRETFVVGKVGTIAGCKVSDGVITRNSKARLIRDGVVVYESKISSLKRFNEDAREVKNGYECGIMLENFNDIKEGDVIETFKDVEEQVTL.

3 disordered regions span residues 94-125 (APEKTEVIPEETENTVEESTAAETVESEPETA), 165-232 (ESEA…TGKK), and 270-321 (RQEQ…SSEV). Basic and acidic residues-rich tracts occupy residues 165 to 176 (ESEAEKGTEIEK), 222 to 232 (GPAEARETGKK), and 270 to 284 (RQEQKRREEAKKREA). Over residues 299–313 (QQRRSLKRGGKRKKY) the composition is skewed to basic residues. A tr-type G domain is found at 405–574 (ERPPVITIMG…LLQAEMMELK (170 aa)). The tract at residues 414-421 (GHVDHGKT) is G1. Residue 414 to 421 (GHVDHGKT) coordinates GTP. The interval 439-443 (GITQH) is G2. The interval 460-463 (DTPG) is G3. GTP-binding positions include 460-464 (DTPGH) and 514-517 (NKMD). The segment at 514 to 517 (NKMD) is G4. A G5 region spans residues 550–552 (SAH).

It belongs to the TRAFAC class translation factor GTPase superfamily. Classic translation factor GTPase family. IF-2 subfamily.

It is found in the cytoplasm. One of the essential components for the initiation of protein synthesis. Protects formylmethionyl-tRNA from spontaneous hydrolysis and promotes its binding to the 30S ribosomal subunits. Also involved in the hydrolysis of GTP during the formation of the 70S ribosomal complex. This chain is Translation initiation factor IF-2, found in Sulfurovum sp. (strain NBC37-1).